The following is a 782-amino-acid chain: uncharacterized protein (782 aa).

Disordered regions lie at residues 1-127, 205-234, and 308-355; these read MTTT…SAMK, NAAASQVNNRSNTSNSFDSHTTQKAGSYNP, and PYNF…SYLR. A compositionally biased stretch (basic and acidic residues) spans 24–54; it reads KPQEEPTMKDKALLFEKQRQEKKMKHTEAKM. Residues 82–118 are compositionally biased toward low complexity; the sequence is KNVNNATSTNNATSTKNNTKNTPKNTPKNIPKNTTAK. Polar residues predominate over residues 312 to 324; sequence ARNNHGSDVSSAM. Basic and acidic residues predominate over residues 326-336; the sequence is NARRQASETRR. Residues 337 to 346 are compositionally biased toward polar residues; sequence SNLSSYNDRN. Residues 361-628 adopt a coiled-coil conformation; sequence MEKIRTEVDK…ERLRERLREL (268 aa). Residues 629–668 show a composition bias toward basic and acidic residues; sequence GSRDRSYNRSSRDRSHDRLYERSPRSRDRSSRDRSRDRYS. The disordered stretch occupies residues 629 to 689; that stretch reads GSRDRSYNRS…SDSVKDYSVG (61 aa). Residues 669-678 are compositionally biased toward basic residues; it reads RSRSRSRYRR. The segment covering 679 to 689 has biased composition (basic and acidic residues); it reads RSDSVKDYSVG.

This is an uncharacterized protein from Yarrowia lipolytica (strain CLIB 122 / E 150) (Yeast).